The chain runs to 636 residues: Biosynthetic arginine decarboxylase (636 aa).

The residue at position 110 (Lys-110) is an N6-(pyridoxal phosphate)lysine. 290–300 is a substrate binding site; that stretch reads IDVGGGLGVDY.

This sequence belongs to the Orn/Lys/Arg decarboxylase class-II family. SpeA subfamily. The cofactor is Mg(2+). It depends on pyridoxal 5'-phosphate as a cofactor.

The enzyme catalyses L-arginine + H(+) = agmatine + CO2. Functionally, catalyzes the biosynthesis of agmatine from arginine. The chain is Biosynthetic arginine decarboxylase from Pseudomonas aeruginosa (strain ATCC 15692 / DSM 22644 / CIP 104116 / JCM 14847 / LMG 12228 / 1C / PRS 101 / PAO1).